We begin with the raw amino-acid sequence, 44 residues long: DNA-directed RNA polymerase subunit Rpo12 (44 aa).

Residues Cys-8, Cys-22, and Cys-25 each coordinate Zn(2+).

Belongs to the archaeal Rpo12/eukaryotic RPC10 RNA polymerase subunit family. As to quaternary structure, part of the RNA polymerase complex. Requires Zn(2+) as cofactor.

It is found in the cytoplasm. It carries out the reaction RNA(n) + a ribonucleoside 5'-triphosphate = RNA(n+1) + diphosphate. In terms of biological role, DNA-dependent RNA polymerase (RNAP) catalyzes the transcription of DNA into RNA using the four ribonucleoside triphosphates as substrates. This chain is DNA-directed RNA polymerase subunit Rpo12, found in Haloquadratum walsbyi (strain DSM 16790 / HBSQ001).